The following is a 710-amino-acid chain: Lactoperoxidase (710 aa).

An N-terminal signal peptide occupies residues 1-22; it reads MKVLLRLPALLASLTLLQMAAS. Positions 23–98 are excised as a propeptide; the sequence is TRNATRTATI…WEQSLKRLRR (76 aa). Residues N25, N104, and N131 are each glycosylated (N-linked (GlcNAc...) asparagine). C130 and C143 are disulfide-bonded. A heme b-binding site is contributed by D223. The active-site Proton acceptor is the H224. D225 contributes to the Ca(2+) binding site. Residue N238 is glycosylated (N-linked (GlcNAc...) asparagine). 2 cysteine pairs are disulfide-bonded: C244–C254 and C248–C272. T299, F301, D303, and S305 together coordinate Ca(2+). At S313 the chain carries Phosphoserine. N-linked (GlcNAc...) asparagine glycosylation occurs at N320. C352 and C363 are joined by a disulfide. Heme b contacts are provided by E373 and H466. Residue Y480 is modified to 3'-nitrotyrosine. Disulfide bonds link C571–C628 and C669–C694.

The protein belongs to the peroxidase family. XPO subfamily. Ca(2+) is required as a cofactor. Heme b serves as cofactor. In terms of tissue distribution, expressed in the lacrimal gland with higher levels and 3-fold higher activity in adult females than males and secreted into tears (at protein level).

It is found in the secreted. The protein localises to the cytoplasm. The enzyme catalyses 2 a phenolic donor + H2O2 = 2 a phenolic radical donor + 2 H2O. It catalyses the reaction thiocyanate + H2O2 + H(+) = hypothiocyanous acid + H2O. It carries out the reaction iodide + H2O2 = hypoiodite + H2O. Functionally, heme-containing oxidoreductase which catalyzes the conversion of thiocyanate (SCN(-)) into antimicrobial agent hypothiocyanous acid (OSCN(-)) in the presence of hydrogen peroxide (H2O2). Also involved in the conversion of iodide (I(-)) into hypoiodite (IO(-)) in the presence of H2O2. Responsible for the inactivation of a wide range of micro-organisms and hence, important component of defense mechanism. May be implicated in airway host defense against infection. May contribute to maintaining an appropriate H2O2 cellular level, therefore protecting cells from H2O2-caused injuries and inflammation. The polypeptide is Lactoperoxidase (LPO) (Mesocricetus auratus (Golden hamster)).